The primary structure comprises 861 residues: 1,4-alpha-glucan-branching enzyme (861 aa).

Positions 173 and 208 each coordinate (1,4-alpha-D-glucosyl)n. Catalysis depends on Asp-429, which acts as the Nucleophile. Glu-484 (proton donor) is an active-site residue.

This sequence belongs to the glycosyl hydrolase 13 family. GlgB subfamily. Monomer.

The protein resides in the plastid. It localises to the chloroplast. Its subcellular location is the amyloplast. It carries out the reaction Transfers a segment of a (1-&gt;4)-alpha-D-glucan chain to a primary hydroxy group in a similar glucan chain.. It participates in glycan biosynthesis; starch biosynthesis. In terms of biological role, catalyzes the formation of the alpha-1,6-glucosidic linkages in starch by scission of a 1,4-alpha-linked oligosaccharide from growing alpha-1,4-glucan chains and the subsequent attachment of the oligosaccharide to the alpha-1,6 position. The protein is 1,4-alpha-glucan-branching enzyme (SBE1) of Solanum tuberosum (Potato).